The chain runs to 148 residues: MKALIVLGLVLLSVTVQGKVFERCELARTLKRLGMDGYRGISLANWMCLAKWESGYNTRATNYNAGDRSTDYGIFQINSRYWCNDGKTPGAVNACHLSCSALLQDNIADAVACAKRVVRDPQGIRAWVAWRNRCQNRDVRQYVQGCGV.

A signal peptide spans 1-18; the sequence is MKALIVLGLVLLSVTVQG. One can recognise a C-type lysozyme domain in the interval 19–148; that stretch reads KVFERCELAR…VRQYVQGCGV (130 aa). 4 cysteine pairs are disulfide-bonded: cysteine 24/cysteine 146, cysteine 48/cysteine 134, cysteine 83/cysteine 99, and cysteine 95/cysteine 113. Catalysis depends on residues glutamate 53 and aspartate 71.

The protein belongs to the glycosyl hydrolase 22 family. In terms of assembly, monomer.

The protein localises to the secreted. It catalyses the reaction Hydrolysis of (1-&gt;4)-beta-linkages between N-acetylmuramic acid and N-acetyl-D-glucosamine residues in a peptidoglycan and between N-acetyl-D-glucosamine residues in chitodextrins.. Its function is as follows. Lysozymes have primarily a bacteriolytic function; those in tissues and body fluids are associated with the monocyte-macrophage system and enhance the activity of immunoagents. The chain is Lysozyme C (LYZ) from Homo sapiens (Human).